A 205-amino-acid polypeptide reads, in one-letter code: MCIFVDVEGIDGVGKSTVIRLTADELRRRGYLVYTTSEPSDSPIGLFIRRSILESNLEVEPMALALLFAADRVIHYNRVIKPKVKEGYIVITERYIESSVAYQGSQGVPVEWIIEVNSMVAEPDLVIVLNAPLNTVASRLSNRGMLEYFERNTDFLRSVQEVYLRRARERNYPVIDASRVINNVVNDVLTLIEDKAKGKCKNYNQ.

ATP is bound at residue 9-16 (GIDGVGKS).

This sequence belongs to the thymidylate kinase family.

It catalyses the reaction dTMP + ATP = dTDP + ADP. In Caldivirga maquilingensis (strain ATCC 700844 / DSM 13496 / JCM 10307 / IC-167), this protein is Probable thymidylate kinase.